The chain runs to 196 residues: CMRF35-like molecule 2 (196 aa).

The first 17 residues, Met1–Ser17, serve as a signal peptide directing secretion. One can recognise an Ig-like V-type domain in the interval Leu18–Ser122. Over Leu18–Gln171 the chain is Extracellular. The cysteines at positions 36 and 104 are disulfide-linked. The N-linked (GlcNAc...) asparagine glycan is linked to Asn84. Residues Phe172–Trp192 traverse the membrane as a helical segment. The Cytoplasmic segment spans residues Val193–Leu196.

This sequence belongs to the CD300 family. In terms of assembly, interacts with TYROBP.

The protein localises to the cell membrane. Probably acts as an activating receptor. The sequence is that of CMRF35-like molecule 2 (Cd300e) from Mus musculus (Mouse).